The chain runs to 138 residues: Small ribosomal subunit protein uS11c (138 aa).

The segment at 1 to 23 (MAKPIPRIGSRRNGRISSRKSTR) is disordered. Residues 9 to 23 (GSRRNGRISSRKSTR) are compositionally biased toward basic residues.

It belongs to the universal ribosomal protein uS11 family. As to quaternary structure, part of the 30S ribosomal subunit.

It localises to the plastid. Its subcellular location is the chloroplast. This chain is Small ribosomal subunit protein uS11c, found in Cucumis sativus (Cucumber).